The following is a 164-amino-acid chain: Protein DOWNSTREAM OF FLC (164 aa).

The N-terminal stretch at M1–A23 is a signal peptide. Cystine bridges form between C36–C107, C39–C148, and C60–C95.

The protein belongs to the Ole e I family.

It localises to the secreted. In terms of biological role, part of a three-gene cluster containing FLC, UFC and DFC, which is coordinately regulated in response to vernalization. Not regulated by FLX. This Arabidopsis thaliana (Mouse-ear cress) protein is Protein DOWNSTREAM OF FLC (DFC).